We begin with the raw amino-acid sequence, 301 residues long: Acetylglutamate kinase (301 aa).

Substrate contacts are provided by residues 68 to 69 (GG), Arg90, and Asn195.

Belongs to the acetylglutamate kinase family. ArgB subfamily.

Its subcellular location is the cytoplasm. It catalyses the reaction N-acetyl-L-glutamate + ATP = N-acetyl-L-glutamyl 5-phosphate + ADP. The protein operates within amino-acid biosynthesis; L-arginine biosynthesis; N(2)-acetyl-L-ornithine from L-glutamate: step 2/4. In terms of biological role, catalyzes the ATP-dependent phosphorylation of N-acetyl-L-glutamate. This Pseudomonas fluorescens (strain SBW25) protein is Acetylglutamate kinase.